Here is a 1288-residue protein sequence, read N- to C-terminus: Symplekin (1288 aa).

An interaction with HSF1 region spans residues 1 to 124 (MASSSGDSVT…NMLLRDENVN (124 aa)). Position 13 is a phosphoserine (Ser-13). HEAT repeat units follow at residues 31 to 64 (TTSE…LIIN), 67 to 101 (PTLL…EACK), 104 to 146 (IELL…WMVK), 153 to 192 (LQEA…GLIV), and 227 to 266 (VLWE…IARQ). Residues 335-392 (IARNMPSSKDSRKRPRDDTDSTLKKMKLEPNLGEDDEDKDLEPGPSGTSKASAQISGQ) form a disordered region. The short motif at 345–360 (SRKRPRDDTDSTLKKM) is the Nuclear localization signal element. A compositionally biased stretch (basic and acidic residues) spans 349–362 (PRDDTDSTLKKMKL). A Glycyl lysine isopeptide (Lys-Gly) (interchain with G-Cter in SUMO1); alternate cross-link involves residue Lys-361. A Glycyl lysine isopeptide (Lys-Gly) (interchain with G-Cter in SUMO2); alternate cross-link involves residue Lys-361. Residues 380–392 (SGTSKASAQISGQ) show a composition bias toward polar residues. Lys-483 participates in a covalent cross-link: Glycyl lysine isopeptide (Lys-Gly) (interchain with G-Cter in SUMO2). Ser-494 carries the phosphoserine modification. Disordered stretches follow at residues 1130–1151 (PAPA…PPQD) and 1163–1288 (LKRQ…KGNS). Positions 1131-1149 (APAPAPAPAPAPAPAPRPP) are enriched in pro residues. Positions 1163–1173 (LKRQLEEEQKQ) are enriched in basic and acidic residues. Phosphoserine is present on residues Ser-1238 and Ser-1239. A Glycyl lysine isopeptide (Lys-Gly) (interchain with G-Cter in SUMO1) cross-link involves residue Lys-1256. Phosphoserine is present on Ser-1260. Positions 1267 to 1288 (AVEEALKTSSPETREPESKGNS) are enriched in basic and acidic residues. Phosphothreonine is present on Thr-1274. Residue Ser-1276 is modified to Phosphoserine.

The protein belongs to the Symplekin family. As to quaternary structure, found in a heat-sensitive complex at least composed of several cleavage and polyadenylation specific and cleavage stimulation factors. Interacts with CPSF2, CPSF3 and CSTF2. Interacts (via N-terminus) with HSF1; this interaction is direct and occurs upon heat shock. Interacts with SSU72.

The protein resides in the cytoplasm. The protein localises to the cytoskeleton. Its subcellular location is the cell junction. It localises to the tight junction. It is found in the cell membrane. The protein resides in the nucleus. The protein localises to the nucleoplasm. Scaffold protein that functions as a component of a multimolecular complex involved in histone mRNA 3'-end processing. Specific component of the tight junction (TJ) plaque, but might not be an exclusively junctional component. May have a house-keeping rule. Is involved in pre-mRNA polyadenylation. Enhances SSU72 phosphatase activity. This is Symplekin (Sympk) from Mus musculus (Mouse).